A 219-amino-acid polypeptide reads, in one-letter code: Ribosomal RNA small subunit methyltransferase G (219 aa).

S-adenosyl-L-methionine is bound by residues glycine 81, leucine 86, and arginine 150.

The protein belongs to the methyltransferase superfamily. RNA methyltransferase RsmG family.

The protein resides in the cytoplasm. The enzyme catalyses guanosine(527) in 16S rRNA + S-adenosyl-L-methionine = N(7)-methylguanosine(527) in 16S rRNA + S-adenosyl-L-homocysteine. Functionally, specifically methylates the N7 position of guanine in position 527 of 16S rRNA. The chain is Ribosomal RNA small subunit methyltransferase G from Magnetococcus marinus (strain ATCC BAA-1437 / JCM 17883 / MC-1).